Reading from the N-terminus, the 625-residue chain is 1-deoxy-D-xylulose-5-phosphate synthase (625 aa).

Thiamine diphosphate contacts are provided by residues histidine 80 and 121–123 (GHS). A Mg(2+)-binding site is contributed by aspartate 152. Thiamine diphosphate-binding positions include 153 to 154 (GA), asparagine 181, tyrosine 288, and glutamate 370. Asparagine 181 provides a ligand contact to Mg(2+).

The protein belongs to the transketolase family. DXPS subfamily. As to quaternary structure, homodimer. It depends on Mg(2+) as a cofactor. Thiamine diphosphate serves as cofactor.

The catalysed reaction is D-glyceraldehyde 3-phosphate + pyruvate + H(+) = 1-deoxy-D-xylulose 5-phosphate + CO2. The protein operates within metabolic intermediate biosynthesis; 1-deoxy-D-xylulose 5-phosphate biosynthesis; 1-deoxy-D-xylulose 5-phosphate from D-glyceraldehyde 3-phosphate and pyruvate: step 1/1. Catalyzes the acyloin condensation reaction between C atoms 2 and 3 of pyruvate and glyceraldehyde 3-phosphate to yield 1-deoxy-D-xylulose-5-phosphate (DXP). This chain is 1-deoxy-D-xylulose-5-phosphate synthase, found in Alteromonas mediterranea (strain DSM 17117 / CIP 110805 / LMG 28347 / Deep ecotype).